We begin with the raw amino-acid sequence, 443 residues long: Probable glycine dehydrogenase (decarboxylating) subunit 1 (443 aa).

It belongs to the GcvP family. N-terminal subunit subfamily. The glycine cleavage system is composed of four proteins: P, T, L and H. In this organism, the P 'protein' is a heterodimer of two subunits.

The enzyme catalyses N(6)-[(R)-lipoyl]-L-lysyl-[glycine-cleavage complex H protein] + glycine + H(+) = N(6)-[(R)-S(8)-aminomethyldihydrolipoyl]-L-lysyl-[glycine-cleavage complex H protein] + CO2. The glycine cleavage system catalyzes the degradation of glycine. The P protein binds the alpha-amino group of glycine through its pyridoxal phosphate cofactor; CO(2) is released and the remaining methylamine moiety is then transferred to the lipoamide cofactor of the H protein. In Desulfovibrio desulfuricans (strain ATCC 27774 / DSM 6949 / MB), this protein is Probable glycine dehydrogenase (decarboxylating) subunit 1.